A 102-amino-acid polypeptide reads, in one-letter code: MYAIIETGGKQFRVEEGSKIFVEKLASEAGSEIVIDKVLMLGGGDVKVGAPYVENAKVTAEVVEHGRGEKVVIFKKWRRNDSRKKQGHRQDFTALKIKAITA.

This sequence belongs to the bacterial ribosomal protein bL21 family. Part of the 50S ribosomal subunit. Contacts protein L20.

Functionally, this protein binds to 23S rRNA in the presence of protein L20. This is Large ribosomal subunit protein bL21 from Nitratidesulfovibrio vulgaris (strain ATCC 29579 / DSM 644 / CCUG 34227 / NCIMB 8303 / VKM B-1760 / Hildenborough) (Desulfovibrio vulgaris).